The sequence spans 91 residues: Phosphocarrier protein NPr (91 aa).

The 88-residue stretch at 3-90 folds into the HPr domain; that stretch reads KLERQVTICN…ALVDAKFDEA (88 aa). Histidine 17 acts as the Pros-phosphohistidine intermediate in catalysis.

Belongs to the HPr family.

Its subcellular location is the cytoplasm. Its function is as follows. Component of the phosphoenolpyruvate-dependent nitrogen-metabolic phosphotransferase system (nitrogen-metabolic PTS), that seems to be involved in regulating nitrogen metabolism. The phosphoryl group from phosphoenolpyruvate (PEP) is transferred to the phosphoryl carrier protein NPr by enzyme I-Ntr. Phospho-NPr then transfers it to EIIA-Ntr. Could function in the transcriptional regulation of sigma-54 dependent operons in conjunction with the NPr (PtsO) and EIIA-Ntr (PtsN) proteins. This is Phosphocarrier protein NPr (ptsO) from Shewanella violacea (strain JCM 10179 / CIP 106290 / LMG 19151 / DSS12).